Reading from the N-terminus, the 250-residue chain is Flavin-dependent thymidylate synthase (250 aa).

One can recognise a ThyX domain in the interval 7-233 (LSVELIACSS…PTVFGDFQVE (227 aa)). DUMP is bound by residues 92-95 (ELVR), 103-107 (QLSQR), and Arg-172. FAD contacts are provided by residues 95 to 97 (RHR) and Gln-103. Residues 95–105 (RHRHFSFSQLS) carry the ThyX motif motif. FAD contacts are provided by residues 188–190 (NFR) and His-194. Arg-199 provides a ligand contact to dUMP. The active-site Involved in ionization of N3 of dUMP, leading to its activation is Arg-199.

This sequence belongs to the thymidylate synthase ThyX family. Homotetramer. The cofactor is FAD.

The catalysed reaction is dUMP + (6R)-5,10-methylene-5,6,7,8-tetrahydrofolate + NADPH + H(+) = dTMP + (6S)-5,6,7,8-tetrahydrofolate + NADP(+). It participates in pyrimidine metabolism; dTTP biosynthesis. Functionally, catalyzes the reductive methylation of 2'-deoxyuridine-5'-monophosphate (dUMP) to 2'-deoxythymidine-5'-monophosphate (dTMP) while utilizing 5,10-methylenetetrahydrofolate (mTHF) as the methyl donor, and NADPH and FADH(2) as the reductant. The protein is Flavin-dependent thymidylate synthase of Corynebacterium efficiens (strain DSM 44549 / YS-314 / AJ 12310 / JCM 11189 / NBRC 100395).